A 932-amino-acid polypeptide reads, in one-letter code: Beta-mannosidase A (932 aa).

The N-terminal stretch at 1–19 (MRVPAQATIAVLASAVSSP) is a signal peptide. N-linked (GlcNAc...) asparagine glycosylation is found at asparagine 41, asparagine 81, asparagine 94, asparagine 249, asparagine 261, asparagine 284, asparagine 289, asparagine 318, and asparagine 348. Glutamate 480 (proton donor) is an active-site residue. N-linked (GlcNAc...) asparagine glycosylation is found at asparagine 538, asparagine 551, asparagine 609, asparagine 624, asparagine 632, asparagine 659, asparagine 739, and asparagine 791.

Belongs to the glycosyl hydrolase 2 family. Beta-mannosidase A subfamily. In terms of assembly, homodimer.

Its subcellular location is the secreted. The catalysed reaction is Hydrolysis of terminal, non-reducing beta-D-mannose residues in beta-D-mannosides.. It functions in the pathway glycan metabolism; N-glycan degradation. Exoglycosidase that cleaves the single beta-linked mannose residue from the non-reducing end of beta-mannosidic oligosaccharides of various complexity and length. Involved in the degradation of polymeric mannan and galactomannan. The polypeptide is Beta-mannosidase A (mndA) (Aspergillus terreus (strain NIH 2624 / FGSC A1156)).